The chain runs to 322 residues: Heterogeneous nuclear ribonucleoprotein D-like (322 aa).

Residues 1–36 form a disordered region; the sequence is MTGTARSALPLPQSPARALRPSGAARAAPSLSPSRF. Residue Arg-6 is modified to Omega-N-methylarginine. Low complexity predominate over residues 14–36; it reads SPARALRPSGAARAAPSLSPSRF. 2 RRM domains span residues 51 to 133 and 136 to 215; these read NKMF…KGKE and KKVF…QPKE. At Lys-64 the chain carries N6-methyllysine. Lys-112 is covalently cross-linked (Glycyl lysine isopeptide (Lys-Gly) (interchain with G-Cter in SUMO2)). Residue Lys-119 is modified to N6-acetyllysine. Ser-144 carries the phosphoserine modification. 2 disordered regions span residues 216–251 and 299–322; these read VYRQ…NWNQ and SGQQ…YQPY. Residues 226-245 show a composition bias toward gly residues; the sequence is GGRGAAAGGRGGARGRGRGQ. Positions 245 to 322 are necessary for interaction with TNPO1; that stretch reads QGQNWNQGFN…GNHQNNYQPY (78 aa). At Arg-310 the chain carries Dimethylated arginine; alternate. Arg-310 is subject to Omega-N-methylarginine; alternate.

Interacts with TNPO1 and ZNF148. Dimethylation of Arg-310 is probably of the asymmetric type.

Its subcellular location is the nucleus. The protein resides in the cytoplasm. Acts as a transcriptional regulator. Promotes transcription repression. Promotes transcription activation in differentiated myotubes. Binds to double- and single-stranded DNA sequences. Binds to the transcription suppressor CATR sequence of the COX5B promoter. Binds with high affinity to RNA molecules that contain AU-rich elements (AREs) found within the 3'-UTR of many proto-oncogenes and cytokine mRNAs. Binds both to nuclear and cytoplasmic poly(A) mRNAs. Binds to poly(G) and poly(A), but not to poly(U) or poly(C) RNA homopolymers. Binds to the 5'-ACUAGC-3' RNA consensus sequence. The sequence is that of Heterogeneous nuclear ribonucleoprotein D-like (Hnrnpdl) from Rattus norvegicus (Rat).